We begin with the raw amino-acid sequence, 522 residues long: Putative glucosylceramidase 3 (522 aa).

An N-terminal signal peptide occupies residues 1–21 (MSRWKVVILCLLSFMFEIGHA). Glutamate 259 functions as the Proton donor in the catalytic mechanism. The Nucleophile role is filled by glutamate 364.

This sequence belongs to the glycosyl hydrolase 30 family.

The catalysed reaction is a beta-D-glucosylceramide + H2O = an N-acyl-sphingoid base + D-glucose. It catalyses the reaction a beta-D-glucosyl-(1&lt;-&gt;1')-N-acylsphing-4-enine + H2O = an N-acylsphing-4-enine + D-glucose. The enzyme catalyses an N-acyl-1-beta-D-glucosyl-15-methylhexadecasphing-4-enine + H2O = an N-acyl-15-methylhexadecasphing-4-enine + D-glucose. The protein operates within lipid metabolism; sphingolipid metabolism. In terms of biological role, glucosylceramidase that catalyzes the hydrolysis of glucosylceramides into free ceramides and glucose. C.elegans contain specific sphingoid bases, which are unique or different in structure compared to the sphingoid bases found in other animals. Two examples of these distinctive compounds are: 15-methylhexadecasphinganine and 15-methylhexadecasphing-4-enine. This is Putative glucosylceramidase 3 from Caenorhabditis elegans.